The following is a 303-amino-acid chain: Zinc import ATP-binding protein ZnuC (303 aa).

The 216-residue stretch at 17–232 (VSLENVGVLR…PEYVRLFGSR (216 aa)) folds into the ABC transporter domain. 49 to 56 (GPNGSGKS) serves as a coordination point for ATP. The disordered stretch occupies residues 263–303 (DHCHPDDGHHAHEHGHAGHEHDHDHPDHAHPHAHEAGERHA).

Belongs to the ABC transporter superfamily. Zinc importer (TC 3.A.1.15.5) family. In terms of assembly, the complex is composed of two ATP-binding proteins (ZnuC), two transmembrane proteins (ZnuB) and a solute-binding protein (ZnuA).

The protein localises to the cell inner membrane. The enzyme catalyses Zn(2+)(out) + ATP(in) + H2O(in) = Zn(2+)(in) + ADP(in) + phosphate(in) + H(+)(in). Functionally, part of the ABC transporter complex ZnuABC involved in zinc import. Responsible for energy coupling to the transport system. The sequence is that of Zinc import ATP-binding protein ZnuC from Rhizobium johnstonii (strain DSM 114642 / LMG 32736 / 3841) (Rhizobium leguminosarum bv. viciae).